A 374-amino-acid chain; its full sequence is Putative glutamate--cysteine ligase 2-1 (374 aa).

The protein belongs to the glutamate--cysteine ligase type 2 family. YbdK subfamily.

The catalysed reaction is L-cysteine + L-glutamate + ATP = gamma-L-glutamyl-L-cysteine + ADP + phosphate + H(+). In terms of biological role, ATP-dependent carboxylate-amine ligase which exhibits weak glutamate--cysteine ligase activity. In Saccharopolyspora erythraea (strain ATCC 11635 / DSM 40517 / JCM 4748 / NBRC 13426 / NCIMB 8594 / NRRL 2338), this protein is Putative glutamate--cysteine ligase 2-1.